Reading from the N-terminus, the 114-residue chain is Small ribosomal subunit protein uS15 (114 aa).

The protein belongs to the universal ribosomal protein uS15 family.

In Musca domestica (House fly), this protein is Small ribosomal subunit protein uS15 (RpS13).